A 1184-amino-acid chain; its full sequence is Protein stu1 (1184 aa).

2 HEAT repeats span residues 92–130 (FCPVLLERLGDHKERVRAQAAQIFTDLWPAASADVEHYV) and 162–194 (RSYVPSVVSCLEDADSFVRHTAKSTVVELFQGA). 2 stretches are compositionally biased toward basic and acidic residues: residues 229-240 (SSTARPRSRVEP) and 308-317 (EAEKAPHMET). Residues 229–336 (SSTARPRSRV…APQPLHAETS (108 aa)) are disordered. An HEAT 3 repeat occupies 463 to 499 (VTYTPRLLQHVTSACQDKNAQLRLFAAGWLKTLLNKQ). Disordered stretches follow at residues 564 to 584 (LEKDPANPNRDQSSYLSSDTL) and 602 to 906 (ARLA…RVEE). Residues 572 to 584 (NRDQSSYLSSDTL) are compositionally biased toward polar residues. Over residues 640–649 (APLSSLSSAP) the composition is skewed to low complexity. Residues 723–737 (SASNENETQVATQVA) are compositionally biased toward polar residues. 2 stretches are compositionally biased toward basic and acidic residues: residues 787–811 (AGRHDDHAPCEISFDKLDRHDENKL) and 882–895 (EQDRRVEKTIDSAE).

The protein belongs to the CLASP family. As to quaternary structure, interacts with microtubules.

The protein localises to the cytoplasm. It localises to the cytoskeleton. It is found in the nucleus. Its subcellular location is the spindle. Functionally, microtubule binding protein that promotes the stabilization of dynamic microtubules. Required for mitotic spindle formation. This Aspergillus oryzae (strain ATCC 42149 / RIB 40) (Yellow koji mold) protein is Protein stu1 (stu1).